Here is a 283-residue protein sequence, read N- to C-terminus: Polyamine aminopropyltransferase (283 aa).

Residues 2-237 (ELWYTEEHTD…GHWLFGFASK (236 aa)) enclose the PABS domain. Glutamine 31 contributes to the S-methyl-5'-thioadenosine binding site. Residues histidine 62 and aspartate 86 each contribute to the spermidine site. S-methyl-5'-thioadenosine contacts are provided by residues glutamate 106 and 137 to 138 (DG). Aspartate 155 serves as the catalytic Proton acceptor. 155 to 158 (DSTD) lines the spermidine pocket. Proline 162 lines the S-methyl-5'-thioadenosine pocket.

It belongs to the spermidine/spermine synthase family. Homodimer or homotetramer.

It localises to the cytoplasm. It carries out the reaction S-adenosyl 3-(methylsulfanyl)propylamine + putrescine = S-methyl-5'-thioadenosine + spermidine + H(+). The protein operates within amine and polyamine biosynthesis; spermidine biosynthesis; spermidine from putrescine: step 1/1. Functionally, catalyzes the irreversible transfer of a propylamine group from the amino donor S-adenosylmethioninamine (decarboxy-AdoMet) to putrescine (1,4-diaminobutane) to yield spermidine. In Clostridium perfringens (strain SM101 / Type A), this protein is Polyamine aminopropyltransferase.